Consider the following 259-residue polypeptide: Probable dihydroorotate dehydrogenase B (NAD(+)), electron transfer subunit (259 aa).

The region spanning 1–89 (MLPLNVTITQ…RGPFGKGFTL (89 aa)) is the FAD-binding FR-type domain. Positions 211, 216, 219, and 229 each coordinate [2Fe-2S] cluster.

Belongs to the PyrK family. Heterotetramer of 2 PyrK and 2 PyrD type B subunits. Requires [2Fe-2S] cluster as cofactor. FAD serves as cofactor.

Its pathway is pyrimidine metabolism; UMP biosynthesis via de novo pathway; orotate from (S)-dihydroorotate (NAD(+) route): step 1/1. In terms of biological role, responsible for channeling the electrons from the oxidation of dihydroorotate from the FMN redox center in the PyrD type B subunit to the ultimate electron acceptor NAD(+). In Methanosarcina acetivorans (strain ATCC 35395 / DSM 2834 / JCM 12185 / C2A), this protein is Probable dihydroorotate dehydrogenase B (NAD(+)), electron transfer subunit.